The sequence spans 276 residues: NADPH-dependent 7-cyano-7-deazaguanine reductase (276 aa).

83-85 provides a ligand contact to substrate; that stretch reads VES. Residue 85-86 coordinates NADPH; the sequence is SK. The active-site Thioimide intermediate is the Cys184. Asp191 functions as the Proton donor in the catalytic mechanism. 223–224 contributes to the substrate binding site; the sequence is HE. 252 to 253 is a binding site for NADPH; that stretch reads RG.

Belongs to the GTP cyclohydrolase I family. QueF type 2 subfamily. Homodimer.

It localises to the cytoplasm. The catalysed reaction is 7-aminomethyl-7-carbaguanine + 2 NADP(+) = 7-cyano-7-deazaguanine + 2 NADPH + 3 H(+). It participates in tRNA modification; tRNA-queuosine biosynthesis. Functionally, catalyzes the NADPH-dependent reduction of 7-cyano-7-deazaguanine (preQ0) to 7-aminomethyl-7-deazaguanine (preQ1). This is NADPH-dependent 7-cyano-7-deazaguanine reductase from Azotobacter vinelandii (strain DJ / ATCC BAA-1303).